Reading from the N-terminus, the 132-residue chain is Small ribosomal subunit protein uS8c (132 aa).

This sequence belongs to the universal ribosomal protein uS8 family. In terms of assembly, part of the 30S ribosomal subunit.

It localises to the plastid. The protein localises to the chloroplast. Its function is as follows. One of the primary rRNA binding proteins, it binds directly to 16S rRNA central domain where it helps coordinate assembly of the platform of the 30S subunit. The chain is Small ribosomal subunit protein uS8c (rps8) from Rhodomonas salina (Cryptomonas salina).